The primary structure comprises 429 residues: Dihydroorotase (429 aa).

The Zn(2+) site is built by His61 and His63. Substrate is bound by residues 63–65 (HYR) and Asn95. Zn(2+)-binding residues include Asp153, His180, and His233. Asn279 serves as a coordination point for substrate. Asp306 is a Zn(2+) binding site. Residue Asp306 is part of the active site. Residues His310 and 324-325 (FG) each bind substrate.

This sequence belongs to the metallo-dependent hydrolases superfamily. DHOase family. Class I DHOase subfamily. Requires Zn(2+) as cofactor.

The enzyme catalyses (S)-dihydroorotate + H2O = N-carbamoyl-L-aspartate + H(+). It functions in the pathway pyrimidine metabolism; UMP biosynthesis via de novo pathway; (S)-dihydroorotate from bicarbonate: step 3/3. Its function is as follows. Catalyzes the reversible cyclization of carbamoyl aspartate to dihydroorotate. The sequence is that of Dihydroorotase from Ligilactobacillus salivarius (strain UCC118) (Lactobacillus salivarius).